We begin with the raw amino-acid sequence, 88 residues long: Large ribosomal subunit protein bL27 (88 aa).

Residues 1–21 form a disordered region; it reads MAHKKAGGSSRNGRDSDGRRL.

Belongs to the bacterial ribosomal protein bL27 family.

The protein is Large ribosomal subunit protein bL27 of Methylobacterium nodulans (strain LMG 21967 / CNCM I-2342 / ORS 2060).